A 252-amino-acid chain; its full sequence is Triosephosphate isomerase (252 aa).

10–12 lines the substrate pocket; that stretch reads NWK. H96 acts as the Electrophile in catalysis. E168 serves as the catalytic Proton acceptor. Residues G174, S214, and 235 to 236 each bind substrate; that span reads GG.

Belongs to the triosephosphate isomerase family. Homodimer.

Its subcellular location is the cytoplasm. The catalysed reaction is D-glyceraldehyde 3-phosphate = dihydroxyacetone phosphate. It functions in the pathway carbohydrate biosynthesis; gluconeogenesis. Its pathway is carbohydrate degradation; glycolysis; D-glyceraldehyde 3-phosphate from glycerone phosphate: step 1/1. Its function is as follows. Involved in the gluconeogenesis. Catalyzes stereospecifically the conversion of dihydroxyacetone phosphate (DHAP) to D-glyceraldehyde-3-phosphate (G3P). This Streptococcus equi subsp. zooepidemicus (strain MGCS10565) protein is Triosephosphate isomerase.